A 314-amino-acid chain; its full sequence is Vacuolar membrane protein FOSTERSB_4073 (314 aa).

The segment at 32–60 (KPTSSVVSETSSKSLPSLTSSAFSTSSGA) is disordered. A helical transmembrane segment spans residues 93–113 (VYIAVGAVIGAIFISILIWWL). S148, S254, and S274 each carry phosphoserine. The tract at residues 240 to 309 (EERKLNLNRP…PSMFLDDVLN (70 aa)) is disordered. Basic and acidic residues predominate over residues 254–269 (SPERKEKKINSMEGYH).

It belongs to the PRM5 family.

It is found in the vacuole membrane. The protein is Vacuolar membrane protein FOSTERSB_4073 of Saccharomyces cerevisiae (strain FostersB) (Baker's yeast).